Here is a 306-residue protein sequence, read N- to C-terminus: F-box/LRR-repeat protein At3g26922 (306 aa).

One can recognise an F-box domain in the interval 13 to 73 (EDRISDLPEA…QSEDETYSEI (61 aa)). 6 LRR repeats span residues 67-93 (DETYSEIVCRLLLSNKAPFLESLHLGF), 98-122 (CRSVEVGMWIGIAYARHVRDLVLHV), 138-170 (CETLESLTLRSWVLVDVPSPACLKSLRTLRLEN), 171-196 (VDYKYDDSVYNLLSGCPNLENLVVYR), 215-243 (LTIYDDNDGEYCTGYVINAPSLKYLKIDG), and 263-288 (IMNVSKIINEKLLETLTSVKRLSLAL).

The protein is F-box/LRR-repeat protein At3g26922 of Arabidopsis thaliana (Mouse-ear cress).